The primary structure comprises 231 residues: ATP phosphoribosyltransferase (231 aa).

Belongs to the ATP phosphoribosyltransferase family. Short subfamily. Heteromultimer composed of HisG and HisZ subunits.

It is found in the cytoplasm. It carries out the reaction 1-(5-phospho-beta-D-ribosyl)-ATP + diphosphate = 5-phospho-alpha-D-ribose 1-diphosphate + ATP. The protein operates within amino-acid biosynthesis; L-histidine biosynthesis; L-histidine from 5-phospho-alpha-D-ribose 1-diphosphate: step 1/9. Functionally, catalyzes the condensation of ATP and 5-phosphoribose 1-diphosphate to form N'-(5'-phosphoribosyl)-ATP (PR-ATP). Has a crucial role in the pathway because the rate of histidine biosynthesis seems to be controlled primarily by regulation of HisG enzymatic activity. This Rhizobium etli (strain ATCC 51251 / DSM 11541 / JCM 21823 / NBRC 15573 / CFN 42) protein is ATP phosphoribosyltransferase (hisG).